Reading from the N-terminus, the 43-residue chain is ACAGLYKKCGKGVNTCCENRPCKCDLAMGNCICKKKFVEFFGG.

4 disulfides stabilise this stretch: C2–C17, C9–C22, C16–C33, and C24–C31. Glycine amide is present on G43.

As to expression, expressed by the venom gland.

It is found in the secreted. Its function is as follows. Inhibits high-voltage activated calcium channels. Shifts the voltage-dependence for activation towards hyperpolarized membrane potentials for L- (Cav1), P/Q- (Cav2.1/CACNA1A) and R-type (Cav2.3/CACNA1E) calcium currents. Causes immediate agitation and clockwise gyration, followed by the gradual development of general flaccid paralysis when injected intracerebroventricular into mice at dose levels of 5 ug per mouse. The chain is Omega-ctenitoxin-Pr1a from Phoneutria reidyi (Brazilian Amazonian armed spider).